We begin with the raw amino-acid sequence, 117 residues long: Minor capsid protein p17 (117 aa).

N12 is a glycosylation site (N-linked (GlcNAc...) asparagine; by host). A helical transmembrane segment spans residues 39 to 59 (AILLGILILLVIILIIVAIVY). The disordered stretch occupies residues 96-117 (KNSTSQQSHIPSDEQLAELAHS). An N-linked (GlcNAc...) asparagine; by host glycan is attached at N97.

This sequence belongs to the asfivirus minor capsid protein p17 family. As to quaternary structure, interacts with the minor capsid protein M1249L and with the hexon capsid protein p72 capsomers; these interactions form a rigid zipper structure that stabilizes the capsomers. Interacts with host STING1.

It is found in the virion membrane. The protein resides in the host endoplasmic reticulum membrane. In terms of biological role, together with the penton and the other minor capsid proteins (M1249L, p49), forms a complicated network immediately below the outer capsid shell, stabilizing the whole capsid. Three copies of p17 encircle each p72 capsomer in the inner capsid shell, anchoring p72 capsomers on the inner membrane. Required for the assembly of the capsid and icosahedral morphogenesis. Additionally, inhibits the host cGAS-STING pathway through its interaction with STING1 and subsequent interference of the recruitment of downstream components TBK1 and IKBKE. The protein is Minor capsid protein p17 of African swine fever virus (isolate Tick/South Africa/Pretoriuskop Pr4/1996) (ASFV).